The following is a 422-amino-acid chain: Probable FBD-associated F-box protein At1g32375 (422 aa).

The F-box domain maps to 1 to 53 (MDKLSQLPEALLVRILSLLSAKDVVSTMVLSKRWQFLWMLVPKLIYDDSYQAI). The region spanning 342 to 392 (CWNEPSAVPECLLTSLETLEWVKYEGTEEEKEVAAFILRSGSCLKKVTISS) is the FBD domain.

The sequence is that of Probable FBD-associated F-box protein At1g32375 from Arabidopsis thaliana (Mouse-ear cress).